Reading from the N-terminus, the 478-residue chain is ATP synthase subunit beta (478 aa).

Residue 158–165 (GGAGVGKT) coordinates ATP.

The protein belongs to the ATPase alpha/beta chains family. F-type ATPases have 2 components, CF(1) - the catalytic core - and CF(0) - the membrane proton channel. CF(1) has five subunits: alpha(3), beta(3), gamma(1), delta(1), epsilon(1). CF(0) has three main subunits: a(1), b(2) and c(9-12). The alpha and beta chains form an alternating ring which encloses part of the gamma chain. CF(1) is attached to CF(0) by a central stalk formed by the gamma and epsilon chains, while a peripheral stalk is formed by the delta and b chains.

The protein resides in the cell inner membrane. It catalyses the reaction ATP + H2O + 4 H(+)(in) = ADP + phosphate + 5 H(+)(out). Functionally, produces ATP from ADP in the presence of a proton gradient across the membrane. The catalytic sites are hosted primarily by the beta subunits. The sequence is that of ATP synthase subunit beta from Rhizobium johnstonii (strain DSM 114642 / LMG 32736 / 3841) (Rhizobium leguminosarum bv. viciae).